A 535-amino-acid chain; its full sequence is uncharacterized protein (535 aa).

WD repeat units follow at residues 189–226, 228–267, 269–314, 320–359, 362–404, and 462–505; these read RDDFYTSLLSWSPKGDLAIGLAENIYLWSKELGPTRVL, ESIYDVSSVAYSYNGDILAVGRVDGTLQFWQDNERVPRIS, HHPG…AVLV, AHDEQVCGLTWNHDGSQFASGGNDNRVCLFKGSDLRQPLY, QQNA…KIDE, and VHSV…SWHN.

This sequence belongs to the WD repeat CDC20/Fizzy family.

This is an uncharacterized protein from Schizosaccharomyces pombe (strain 972 / ATCC 24843) (Fission yeast).